A 1041-amino-acid polypeptide reads, in one-letter code: Serine-repeat antigen protein 6 (1041 aa).

A signal peptide spans 1-34 (MIFFNFKLNRMICPIFFLYIINVLFTQYFIKCEG). N-linked (GlcNAc...) asparagine glycosylation is present at N84. A compositionally biased stretch (low complexity) spans 101–111 (KVVSSSESGKG). A disordered region spans residues 101–173 (KVVSSSESGK…TESSSETLNK (73 aa)). The span at 114–149 (VSHTKVTSEGLSDTQPNVTQSVSSSTHTPGSLDSTM) shows a compositional bias: polar residues. N-linked (GlcNAc...) asparagine glycosylation is present at N130. Over residues 150-168 (STEQHSSVSQSSLPTESSS) the composition is skewed to low complexity. A glycan (N-linked (GlcNAc...) asparagine) is linked at N459. Residues 500–577 (TLPSESPSES…GDTNYVYDFD (78 aa)) are disordered. Positions 502-515 (PSESPSESSSKSDS) are enriched in low complexity. Over residues 521–545 (NDKDKNEDKDDMSKNSKEEFKNDDK) the composition is skewed to basic and acidic residues. N554 carries an N-linked (GlcNAc...) asparagine glycan. Over residues 564–574 (NINNGDTNYVY) the composition is skewed to low complexity. A glycan (N-linked (GlcNAc...) asparagine) is linked at N583. C654 is an active-site residue. The N-linked (GlcNAc...) asparagine glycan is linked to N684. Catalysis depends on residues H820 and N845. N-linked (GlcNAc...) asparagine glycosylation occurs at N984.

Belongs to the peptidase C1 family. In terms of processing, just prior to merozoite egress from host erythrocytes, proteolytically cleaved by SUB1 to generate the active 75kDa form.

Its subcellular location is the parasitophorous vacuole lumen. The protein resides in the parasitophorous vacuole membrane. Functionally, cysteine protease which plays an essential role in merozoite egress from host erythrocytes. May cleave host SPTB/beta spectrin and ANK1/ankyrin-1 which disrupts host erythrocyte actin cytoskeleton and leads to host erythrocyte cell membrane rupture. The chain is Serine-repeat antigen protein 6 from Plasmodium falciparum.